The chain runs to 931 residues: Isoleucine--tRNA ligase (931 aa).

Positions 57–67 match the 'HIGH' region motif; the sequence is PYANGNIHIGH. Glu555 serves as a coordination point for L-isoleucyl-5'-AMP. The 'KMSKS' region motif lies at 596–600; that stretch reads KMSKS. Lys599 is an ATP binding site. Residues Cys890, Cys893, Cys910, and Cys913 each contribute to the Zn(2+) site.

Belongs to the class-I aminoacyl-tRNA synthetase family. IleS type 1 subfamily. In terms of assembly, monomer. Requires Zn(2+) as cofactor.

It is found in the cytoplasm. The catalysed reaction is tRNA(Ile) + L-isoleucine + ATP = L-isoleucyl-tRNA(Ile) + AMP + diphosphate. In terms of biological role, catalyzes the attachment of isoleucine to tRNA(Ile). As IleRS can inadvertently accommodate and process structurally similar amino acids such as valine, to avoid such errors it has two additional distinct tRNA(Ile)-dependent editing activities. One activity is designated as 'pretransfer' editing and involves the hydrolysis of activated Val-AMP. The other activity is designated 'posttransfer' editing and involves deacylation of mischarged Val-tRNA(Ile). This chain is Isoleucine--tRNA ligase, found in Limosilactobacillus reuteri subsp. reuteri (strain JCM 1112) (Lactobacillus reuteri).